A 530-amino-acid polypeptide reads, in one-letter code: Light-harvesting complex I LH38 proteins (530 aa).

The protein resides in the plastid. Its subcellular location is the chloroplast. This Euglena gracilis protein is Light-harvesting complex I LH38 proteins.